The primary structure comprises 281 residues: MEMO1 family protein Pars_0062 (281 aa).

Belongs to the MEMO1 family.

The chain is MEMO1 family protein Pars_0062 from Pyrobaculum arsenaticum (strain DSM 13514 / JCM 11321 / PZ6).